A 554-amino-acid chain; its full sequence is Inactive serine/threonine-protein kinase/endoribonuclease IRE1-like (554 aa).

A signal peptide spans 1-17 (MWLLAISLVGLLVVVVC). Positions 36–85 (KRDKNSAPRVSASGEDGTKNEQVEKKSDPSGGLGEENEKTNSESKVLSVP) are disordered. Residues 51 to 63 (DGTKNEQVEKKSD) are compositionally biased toward basic and acidic residues. The region spanning 121–408 (LVSTNEMKYG…ATQVLLHPLF (288 aa)) is the Protein kinase domain. ATP is bound at residue lysine 150. Positions 411–554 (SEKRLFFLRE…GEEAFEKYFN (144 aa)) constitute a KEN domain.

The protein belongs to the protein kinase superfamily. Ser/Thr protein kinase family.

This Arabidopsis thaliana (Mouse-ear cress) protein is Inactive serine/threonine-protein kinase/endoribonuclease IRE1-like.